Reading from the N-terminus, the 85-residue chain is Large ribosomal subunit protein bL27 (85 aa).

A disordered region spans residues 1-22; sequence MAHKKAGGSTKNGRDSESKRLG.

The protein belongs to the bacterial ribosomal protein bL27 family.

The protein is Large ribosomal subunit protein bL27 of Alteromonas mediterranea (strain DSM 17117 / CIP 110805 / LMG 28347 / Deep ecotype).